Reading from the N-terminus, the 682-residue chain is DNA-directed RNA polymerase subunit beta' (682 aa).

Residues Cys69, Cys71, Cys87, and Cys90 each coordinate Zn(2+). The Mg(2+) site is built by Asp489, Asp491, and Asp493.

This sequence belongs to the RNA polymerase beta' chain family. RpoC1 subfamily. In terms of assembly, in plastids the minimal PEP RNA polymerase catalytic core is composed of four subunits: alpha, beta, beta', and beta''. When a (nuclear-encoded) sigma factor is associated with the core the holoenzyme is formed, which can initiate transcription. Mg(2+) is required as a cofactor. It depends on Zn(2+) as a cofactor.

It is found in the plastid. The protein localises to the chloroplast. The catalysed reaction is RNA(n) + a ribonucleoside 5'-triphosphate = RNA(n+1) + diphosphate. DNA-dependent RNA polymerase catalyzes the transcription of DNA into RNA using the four ribonucleoside triphosphates as substrates. The polypeptide is DNA-directed RNA polymerase subunit beta' (Agrostis stolonifera (Creeping bentgrass)).